Here is a 299-residue protein sequence, read N- to C-terminus: MREIIDGKLVARGLLDRLRVSVDRLKAEHGIVPHLVVVIVGDDPASKLYVGNKQRKAEELGLQSRTIALEHDTSQEELLRIIDELNRDAAVHGILVQLPLPRHIDKELVINAISPEKDVDGFHNANAGKLATGQLDCMIPCTPQGCIHLIKTVKQDLAGSNAVVVGRSNIVGKPVALLLLYENCTVTVLHSASRNLEEHCLRADIIVAAVGKARFIRASWIKPGAIVVDVGINLVEESGKKRFVGDVEFEGLQDVPCSVTPVPGGVGPMTIAFLLVNTVLGSCKQCGVSYEDIKSSLLQ.

NADP(+)-binding positions include 166-168 (GRS), serine 191, and isoleucine 232.

Belongs to the tetrahydrofolate dehydrogenase/cyclohydrolase family. In terms of assembly, homodimer.

The enzyme catalyses (6R)-5,10-methylene-5,6,7,8-tetrahydrofolate + NADP(+) = (6R)-5,10-methenyltetrahydrofolate + NADPH. It carries out the reaction (6R)-5,10-methenyltetrahydrofolate + H2O = (6R)-10-formyltetrahydrofolate + H(+). The protein operates within one-carbon metabolism; tetrahydrofolate interconversion. Its function is as follows. Catalyzes the oxidation of 5,10-methylenetetrahydrofolate to 5,10-methenyltetrahydrofolate and then the hydrolysis of 5,10-methenyltetrahydrofolate to 10-formyltetrahydrofolate. The polypeptide is Bifunctional protein FolD (Anaplasma marginale (strain St. Maries)).